The primary structure comprises 450 residues: tRNA modification GTPase MnmE (450 aa).

Residues R23, E79, and K118 each coordinate (6S)-5-formyl-5,6,7,8-tetrahydrofolate. The TrmE-type G domain occupies 214 to 374 (GITLILVGKP…LKEHILNKVG (161 aa)). A K(+)-binding site is contributed by N224. GTP contacts are provided by residues 224–229 (NAGKSS), 243–249 (TSIAGTT), and 268–271 (DTAG). S228 contributes to the Mg(2+) binding site. Residues T243, I245, and T248 each contribute to the K(+) site. T249 serves as a coordination point for Mg(2+). K450 contacts (6S)-5-formyl-5,6,7,8-tetrahydrofolate.

Belongs to the TRAFAC class TrmE-Era-EngA-EngB-Septin-like GTPase superfamily. TrmE GTPase family. As to quaternary structure, homodimer. Heterotetramer of two MnmE and two MnmG subunits. K(+) is required as a cofactor.

Its subcellular location is the cytoplasm. Exhibits a very high intrinsic GTPase hydrolysis rate. Involved in the addition of a carboxymethylaminomethyl (cmnm) group at the wobble position (U34) of certain tRNAs, forming tRNA-cmnm(5)s(2)U34. The sequence is that of tRNA modification GTPase MnmE from Francisella tularensis subsp. holarctica (strain FTNF002-00 / FTA).